Here is a 564-residue protein sequence, read N- to C-terminus: ATP-dependent RNA helicase DBP3 (564 aa).

The tract at residues 31-125 (TKQQTMSKDK…TNYTQSSKLS (95 aa)) is disordered. Residues 58-73 (ADSKKQRKLEKQEKKD) are compositionally biased toward basic and acidic residues. Positions 74-96 (KKDKKDKKEKKEKKEKKHKKEKK) are enriched in basic residues. Low complexity predominate over residues 112–125 (SSSSTNYTQSSKLS). A Q motif motif is present at residues 155–181 (LSFDQVQLTSAITSKLSKFDKPTPIQS). The Helicase ATP-binding domain maps to 184 to 356 (WPFLLSGKDV…NNFMNSPVKV (173 aa)). 197–204 (AETGSGKT) is an ATP binding site. The DEAD box motif lies at 303–306 (DEAD). Residues 385 to 534 (KLIQLLRKYN…PVPEELLKFG (150 aa)) enclose the Helicase C-terminal domain.

Belongs to the DEAD box helicase family. DDX5/DBP2 subfamily.

Its subcellular location is the nucleus. It is found in the nucleolus. The enzyme catalyses ATP + H2O = ADP + phosphate + H(+). Functionally, ATP-dependent RNA helicase required for 60S ribosomal subunit synthesis. Involved in efficient pre-rRNA processing, predominantly at site A3, which is necessary for the normal formation of 25S and 5.8S rRNAs. This is ATP-dependent RNA helicase DBP3 (DBP3) from Candida albicans (strain SC5314 / ATCC MYA-2876) (Yeast).